A 566-amino-acid chain; its full sequence is Transmembrane protein 151B (566 aa).

Positions 1–11 are enriched in low complexity; sequence MSPPGSAAGES. The segment at 1–25 is disordered; sequence MSPPGSAAGESAAGGGGGGGGPGVS. Positions 12-23 are enriched in gly residues; it reads AAGGGGGGGGPG. Transmembrane regions (helical) follow at residues 65 to 85 and 112 to 132; these read CLLLSLLMYGCLGAVAWCHVT and YVYIPLAFLLMLYAVYLVECW. Over residues 495-512 the composition is skewed to polar residues; the sequence is VNEASCPTEQTRLSSQAS. The tract at residues 495–529 is disordered; sequence VNEASCPTEQTRLSSQASMGDDEDDDEEEAGPPPP. Over residues 514-524 the composition is skewed to acidic residues; the sequence is GDDEDDDEEEA.

Belongs to the TMEM151 family.

The protein resides in the membrane. The protein is Transmembrane protein 151B (TMEM151B) of Homo sapiens (Human).